Here is a 352-residue protein sequence, read N- to C-terminus: uncharacterized protein (352 aa).

A coiled-coil region spans residues 285–352 (FQHLRNARER…IKSEIRRLQR (68 aa)).

This is an uncharacterized protein from Emericella nidulans (strain FGSC A4 / ATCC 38163 / CBS 112.46 / NRRL 194 / M139) (Aspergillus nidulans).